A 246-amino-acid polypeptide reads, in one-letter code: MIWTDVPTPWGMRFQDAATPNAEGMHELYDHMMYYLALMLGLVSYMLYVMMKDYKNNTFAYKYIKHGQTLEIMWTMFPAVMLLLMAFPSFMLLYLCDEVLTPAMTVKVVGLQWYWKYEYSDFVSETGETVEYESYVMPEDMLEEGQLRLLDTDTSMVVPVDTHVRFMVTANDVLHCFTMPSLGIKVDACPGRLNQVSALMQRTGVYYGQCSELCGVNHGLMPIKTECVPIGDFVEWLGEQENVYVA.

A run of 2 helical transmembrane segments spans residues 31–51 and 72–92; these read HMMYYLALMLGLVSYMLYVMM and IMWTMFPAVMLLLMAFPSFML. H175, C210, E212, C214, H218, and M221 together coordinate Cu cation. E212 is a binding site for Mg(2+).

This sequence belongs to the cytochrome c oxidase subunit 2 family. In terms of assembly, component of the cytochrome c oxidase (complex IV, CIV), a multisubunit enzyme composed of a catalytic core of 3 subunits and several supernumerary subunits. The complex exists as a monomer or a dimer and forms supercomplexes (SCs) in the inner mitochondrial membrane with ubiquinol-cytochrome c oxidoreductase (cytochrome b-c1 complex, complex III, CIII). Cu cation serves as cofactor.

Its subcellular location is the mitochondrion inner membrane. The enzyme catalyses 4 Fe(II)-[cytochrome c] + O2 + 8 H(+)(in) = 4 Fe(III)-[cytochrome c] + 2 H2O + 4 H(+)(out). Component of the cytochrome c oxidase, the last enzyme in the mitochondrial electron transport chain which drives oxidative phosphorylation. The respiratory chain contains 3 multisubunit complexes succinate dehydrogenase (complex II, CII), ubiquinol-cytochrome c oxidoreductase (cytochrome b-c1 complex, complex III, CIII) and cytochrome c oxidase (complex IV, CIV), that cooperate to transfer electrons derived from NADH and succinate to molecular oxygen, creating an electrochemical gradient over the inner membrane that drives transmembrane transport and the ATP synthase. Cytochrome c oxidase is the component of the respiratory chain that catalyzes the reduction of oxygen to water. Electrons originating from reduced cytochrome c in the intermembrane space (IMS) are transferred via the dinuclear copper A center (CU(A)) of subunit 2 and heme A of subunit 1 to the active site in subunit 1, a binuclear center (BNC) formed by heme A3 and copper B (CU(B)). The BNC reduces molecular oxygen to 2 water molecules using 4 electrons from cytochrome c in the IMS and 4 protons from the mitochondrial matrix. This Debaryomyces hansenii (strain ATCC 36239 / CBS 767 / BCRC 21394 / JCM 1990 / NBRC 0083 / IGC 2968) (Yeast) protein is Cytochrome c oxidase subunit 2 (COX2).